Consider the following 752-residue polypeptide: MENELVSKVKAPVPGNQTNTLNEAKCPVGAHTLAGARSNANWWPNQLNINILHQHSPLSDPMPEGFNYAEEFKTLDLDAVVKDLRHLMTDSQPWWPADYGHYGPFFIRMAWHSAGTYRIGDGRGGAGSGEQRFAPLNSWPDNGNLDKARRLLWPIKQKYGRKLSWADLMVLAGNVALESMGFKTFGFAGGREDVWEPSEDIYWGPEGKWLDDKRYSGERDLENPLGAVQMGLIYVNPEGPNGKPDPAAAAVDIRETFARMAMNDEETVALIAGGHTFGKTHGAGVPTEYVGPEPEGAGIEEQGLGWKNKLGHGHGYHTITSGLEGAWTTNPIKWDNGFFDNLFGYDWELTKSPAGANQWTPKNGAGKDTVPDAHDKTKRHAPFMATTDISLKVDPIYGPISKRFHEHPQEFADAFAKAWYKLTHRDMGPLPRYLGKLVPKEPQVWQDPVPAVDHELVNDSDVAALKAKLLASGLTVSQLVTTAWAAASSFRGSDKRGGANGARIRLTPQKDWEVNQPKELAKVLPVLEKIQHDFNAQGGKKKISLADLIILGGCAAVEEAAKKGGHSVKVPFTPGRTDASQEHTDVKSFSVMEPKADGFRNYHQKGQPRPAEEMLVDKAQLLRLTAPEMTALVGGLRVLGANYGHSKHGVFTSHPETLTNDFFVNLLDMNNRWQPSGADGVYEARDRQGDHVKWTATRVDLIFGSHSQLRAFAEVYACNDAKEKFVHDFVAAWTKVMNLDRYDLAKKKAAAN.

The tract at residues 1–20 (MENELVSKVKAPVPGNQTNT) is disordered. Positions 111-234 (WHSAGTYRIG…LGAVQMGLIY (124 aa)) form a cross-link, tryptophyl-tyrosyl-methioninium (Trp-Tyr) (with M-260). Histidine 112 functions as the Proton acceptor in the catalytic mechanism. Residues 234–260 (YVNPEGPNGKPDPAAAAVDIRETFARM) constitute a cross-link (tryptophyl-tyrosyl-methioninium (Tyr-Met) (with W-111)). Residue histidine 275 participates in heme b binding.

The protein belongs to the peroxidase family. Peroxidase/catalase subfamily. In terms of assembly, homodimer or homotetramer. It depends on heme b as a cofactor. Formation of the three residue Trp-Tyr-Met cross-link is important for the catalase, but not the peroxidase activity of the enzyme.

It catalyses the reaction H2O2 + AH2 = A + 2 H2O. The enzyme catalyses 2 H2O2 = O2 + 2 H2O. Its function is as follows. Bifunctional enzyme with both catalase and broad-spectrum peroxidase activity. The chain is Catalase-peroxidase from Koribacter versatilis (strain Ellin345).